The primary structure comprises 329 residues: Ankyrin repeat and SOCS box protein 5 (329 aa).

6 ANK repeats span residues Ala-69–Ala-98, Asp-102–Ala-131, Asp-135–Leu-164, Cys-167–Gln-196, His-200–Lys-229, and Tyr-232–Ala-261. The 52-residue stretch at Met-278–Arg-329 folds into the SOCS box domain.

The protein belongs to the ankyrin SOCS box (ASB) family.

It functions in the pathway protein modification; protein ubiquitination. Its function is as follows. May be a substrate-recognition component of a SCF-like ECS (Elongin-Cullin-SOCS-box protein) E3 ubiquitin-protein ligase complex which mediates the ubiquitination and subsequent proteasomal degradation of target proteins. May play a role in the initiation of arteriogenesis. This chain is Ankyrin repeat and SOCS box protein 5 (ASB5), found in Homo sapiens (Human).